Reading from the N-terminus, the 735-residue chain is Ribosomal RNA large subunit methyltransferase K/L (735 aa).

The 112-residue stretch at 45-156 (DGYRACLWSR…RDSLSFSLDL (112 aa)) folds into the THUMP domain.

Belongs to the methyltransferase superfamily. RlmKL family.

Its subcellular location is the cytoplasm. The enzyme catalyses guanosine(2445) in 23S rRNA + S-adenosyl-L-methionine = N(2)-methylguanosine(2445) in 23S rRNA + S-adenosyl-L-homocysteine + H(+). The catalysed reaction is guanosine(2069) in 23S rRNA + S-adenosyl-L-methionine = N(2)-methylguanosine(2069) in 23S rRNA + S-adenosyl-L-homocysteine + H(+). Specifically methylates the guanine in position 2445 (m2G2445) and the guanine in position 2069 (m7G2069) of 23S rRNA. In Allochromatium vinosum (strain ATCC 17899 / DSM 180 / NBRC 103801 / NCIMB 10441 / D) (Chromatium vinosum), this protein is Ribosomal RNA large subunit methyltransferase K/L.